The chain runs to 105 residues: Large ribosomal subunit protein bL21 (105 aa).

It belongs to the bacterial ribosomal protein bL21 family. Part of the 50S ribosomal subunit. Contacts protein L20.

Its function is as follows. This protein binds to 23S rRNA in the presence of protein L20. The polypeptide is Large ribosomal subunit protein bL21 (Rhizobium johnstonii (strain DSM 114642 / LMG 32736 / 3841) (Rhizobium leguminosarum bv. viciae)).